We begin with the raw amino-acid sequence, 905 residues long: Sun domain-containing protein 1 (905 aa).

Disordered stretches follow at residues 1-21 (MSGD…LPLQ), 41-166 (NNTV…ILKQ), and 207-242 (QQQQ…IDNN). The Nuclear segment spans residues 1–290 (MSGDYKPNYQ…NNNNKVNFKQ (290 aa)). Low complexity-rich tracts occupy residues 41–67 (NNTV…SSYL) and 75–101 (SNQI…ASSS). Positions 107–116 (KVDHNSHNNN) are enriched in basic and acidic residues. Residues 117–126 (DDDDIEDDVD) are compositionally biased toward acidic residues. Positions 129–146 (YSTNNASSNILHNRFSNS) are enriched in polar residues. Positions 170–221 (LYNHLNNQIQQQQQQQQQQQQQQQQQQQQQQQQQQQQQQQQQQQRNNNNNSN) form a coiled coil. Over residues 207-227 (QQQQQQQRNNNNNSNSSNNNN) the composition is skewed to low complexity. The helical transmembrane segment at 291–311 (AIWIFIFSVLFIGCLLGLFST) threads the bilayer. The Perinuclear space segment spans residues 312 to 905 (NFYGIHIYFP…IEKQQQSDEL (594 aa)). 2 coiled-coil regions span residues 359-456 (KKNE…QLIQ) and 504-609 (REFN…TQQF). The SUN domain maps to 662-860 (GASIEYNALH…YRFRVHGYQI (199 aa)). Residues 864-901 (EQEQIQIIQEEQSFKQEEINQQQIEQIEQIEQIEKQQQ) are a coiled coil.

As to quaternary structure, homodimer and homooligomer.

The protein resides in the nucleus membrane. In terms of biological role, may have an important role in defining the spacing of the nuclear envelope lumen. Essential for centrosome attachment to the nucleus, maintenance of correct ploidy, proper mitosis, association of the centromere cluster with the centrosome and the maintenance of genome stability. Requires direct chromatin binding for inner nuclear membrane targeting. The sequence is that of Sun domain-containing protein 1 (sun1) from Dictyostelium discoideum (Social amoeba).